The sequence spans 490 residues: GTPase Der (490 aa).

EngA-type G domains lie at 3-166 and 203-376; these read PVVA…MDDV and IKLA…DSST. Residues 9-16, 56-60, 118-121, 209-216, 256-260, and 321-324 each bind GTP; these read GRPNVGKS, DTGGI, NKTD, DTAGV, and NKWD. The KH-like domain occupies 377-461; the sequence is RRVSTAMLTR…PIRIQFKEGE (85 aa).

The protein belongs to the TRAFAC class TrmE-Era-EngA-EngB-Septin-like GTPase superfamily. EngA (Der) GTPase family. As to quaternary structure, associates with the 50S ribosomal subunit.

Its function is as follows. GTPase that plays an essential role in the late steps of ribosome biogenesis. This is GTPase Der from Citrobacter koseri (strain ATCC BAA-895 / CDC 4225-83 / SGSC4696).